The sequence spans 571 residues: MTQPGQTTTTSHEAIDAFKRIVGDEHVLTSERATMPFSKGYRFGGGPVFAVVRPGTLVEMWRALQVSVDNNLIVIPQASNTGLTGGSGPGFQDYDRPIVIISTHRIDEVHLINDAREAISLAGTPLTHLTDALAKHQREPHSVIGSTSIGASVIGGIANNSGGSQIRKGPAFTREAIFARVNDDGKVELVNHLGISLGDDPEVALDRLQRGEWSPEDVTPAPEDSNETEYAEHLRKIVPSPARYNANPEYLFEASGSAGKLMVFAVRTRTFPREVHPTVFYIGTNNTHELEEIRRLFLEADMPLPISGEYMGRSAFDLAEKYGKDTFVFLKFMSPALQTRMFSFKTWANGLFSKIPGIGPTFADTVSQAMFSVLPNQLPKRMMEYRNRFEHHLLLTVSESQKAASEKMLKEFFAEPEHTGEFFICTSDEEKSASLNRFGAASAATRYAALKRRHIAGLIPIDVALRRDDWNWLEVLPEEIDDQLEVKAYYGHFFCHVMHQDYVAKQGVDLEALHDRIQHLLEERGAKLPAEHNYGRIYKLPESMEEHFKELDPTNTFNAGIGGTSPHKDWA.

In terms of domain architecture, FAD-binding PCMH-type spans 44–273; the sequence is GGGPVFAVVR…FAVRTRTFPR (230 aa). FAD-binding positions include 78 to 82, 86 to 87, Gly-145, Ser-152, Gly-162, and Val-263; these read ASNTG and GS.

The protein belongs to the quinone-dependent D-lactate dehydrogenase family. FAD is required as a cofactor.

It is found in the cell membrane. The catalysed reaction is (R)-lactate + a quinone = a quinol + pyruvate. Functionally, catalyzes the oxidation of D-lactate to pyruvate. Also has weak activity with L-lactate and DL-2-hydroxybutyrate. Electrons derived from D-lactate oxidation enter the electron transport chain. Essential for growth with D-lactate as sole carbon and energy source. The sequence is that of Quinone-dependent D-lactate dehydrogenase from Corynebacterium glutamicum (strain ATCC 13032 / DSM 20300 / JCM 1318 / BCRC 11384 / CCUG 27702 / LMG 3730 / NBRC 12168 / NCIMB 10025 / NRRL B-2784 / 534).